The primary structure comprises 41 residues: Large ribosomal subunit protein bL36 (41 aa).

It belongs to the bacterial ribosomal protein bL36 family.

This Pelagibacter ubique (strain HTCC1062) protein is Large ribosomal subunit protein bL36.